Reading from the N-terminus, the 62-residue chain is MAKKAKGNRVQVILECTEHKESGMPGMSRYITTKNRKNTTQRLELMKYNPVLKKMTLHKEIK.

The protein belongs to the bacterial ribosomal protein bL33 family.

The protein is Large ribosomal subunit protein bL33 of Parabacteroides distasonis (strain ATCC 8503 / DSM 20701 / CIP 104284 / JCM 5825 / NCTC 11152).